The chain runs to 315 residues: Aspartate carbamoyltransferase catalytic subunit (315 aa).

Carbamoyl phosphate contacts are provided by R64 and T65. Position 92 (K92) interacts with L-aspartate. Residues R114, H142, and Q145 each coordinate carbamoyl phosphate. Residues R175 and R229 each coordinate L-aspartate. The carbamoyl phosphate site is built by G270 and P271.

The protein belongs to the aspartate/ornithine carbamoyltransferase superfamily. ATCase family. As to quaternary structure, heterododecamer (2C3:3R2) of six catalytic PyrB chains organized as two trimers (C3), and six regulatory PyrI chains organized as three dimers (R2).

The catalysed reaction is carbamoyl phosphate + L-aspartate = N-carbamoyl-L-aspartate + phosphate + H(+). It participates in pyrimidine metabolism; UMP biosynthesis via de novo pathway; (S)-dihydroorotate from bicarbonate: step 2/3. Catalyzes the condensation of carbamoyl phosphate and aspartate to form carbamoyl aspartate and inorganic phosphate, the committed step in the de novo pyrimidine nucleotide biosynthesis pathway. This Methylorubrum extorquens (strain CM4 / NCIMB 13688) (Methylobacterium extorquens) protein is Aspartate carbamoyltransferase catalytic subunit.